We begin with the raw amino-acid sequence, 98 residues long: Defensin-A (98 aa).

Positions 1-18 (MKSITVICFLALCTVAIT) are cleaved as a signal peptide. A propeptide spanning residues 19–58 (SAYPQEPVLADEARPFANSLFDELPEETYQAAVENFRLKR) is cleaved from the precursor. 3 disulfides stabilise this stretch: C61–C88, C74–C94, and C78–C96.

Belongs to the invertebrate defensin family. Type 1 subfamily.

The protein resides in the secreted. Functionally, antibacterial peptide mostly active against Gram-positive bacteria. Has activity against the bacteria Gram-negative E.cloacae beta12. In Aedes aegypti (Yellowfever mosquito), this protein is Defensin-A (DEFA).